The primary structure comprises 670 residues: MTFSVQHAEIHFNQNHIPVSDQFDDVYFSNENGLAETDYVFLQGNQLWERWITHKEANFVIAETGFGTGLNFFAVTKLFREFRQQHENHPLKRLNFISFEKYPLKITALLQAHLAYPQFEDLSAHLQRYWPSLILGCHRIHFGETTLDLWLGDVSENLPQLGDYMNERIDAWFLDGFAPSKNPEMWNDDLYNLMFRFTKPNGSFATFTAASAVRKGLESAGFNVTKRKGFGKKRECLSGLKIQSKSTALSTPWYLAQPAKMEQQDVAIIGGGIASLCAAISLVKRGAKVTIYCEDDSLALNASGNKQGAFYPQLSDDNALTVDFYLHAFSYGRQLLDWAIAQNIAFEHEFCGVALCAYNKKSAVKLAKISQLGLPNEIFQMLNAEQLSEKVGLPLNCKGGWIEQGAWLAPRQFVQNAFSFLEKQGVIIKTSQKITALSQLEKGWELKNMQGQKYCHEVVILANGYKITDFVQTEKLPLYPIRGQVSQIPTSENLLKLKSVLCYDGYLTPANQLKTSHCIGASHVRDNVDRHFSEQEQQENQQKLQQNIAQPWTQDVNTSDNLARVGIRCSVRDLAPMVGNVPHFEQQQADYYNLFNLRRRKQPIQSAINFENLFLTAALGSRGLTSAPLLGETLASIIYGEPLPISEGILHNLSANRAWVKKWLKGSKVE.

Positions 1–242 are tRNA (mnm(5)s(2)U34)-methyltransferase; it reads MTFSVQHAEI…KRECLSGLKI (242 aa). The tract at residues 269 to 670 is FAD-dependent cmnm(5)s(2)U34 oxidoreductase; it reads IGGGIASLCA…KKWLKGSKVE (402 aa).

The protein in the N-terminal section; belongs to the methyltransferase superfamily. tRNA (mnm(5)s(2)U34)-methyltransferase family. This sequence in the C-terminal section; belongs to the DAO family. The cofactor is FAD.

The protein localises to the cytoplasm. The catalysed reaction is 5-aminomethyl-2-thiouridine(34) in tRNA + S-adenosyl-L-methionine = 5-methylaminomethyl-2-thiouridine(34) in tRNA + S-adenosyl-L-homocysteine + H(+). Its function is as follows. Catalyzes the last two steps in the biosynthesis of 5-methylaminomethyl-2-thiouridine (mnm(5)s(2)U) at the wobble position (U34) in tRNA. Catalyzes the FAD-dependent demodification of cmnm(5)s(2)U34 to nm(5)s(2)U34, followed by the transfer of a methyl group from S-adenosyl-L-methionine to nm(5)s(2)U34, to form mnm(5)s(2)U34. The chain is tRNA 5-methylaminomethyl-2-thiouridine biosynthesis bifunctional protein MnmC from Haemophilus influenzae (strain PittEE).